We begin with the raw amino-acid sequence, 342 residues long: UDP-3-O-acylglucosamine N-acyltransferase (342 aa).

His242 functions as the Proton acceptor in the catalytic mechanism.

The protein belongs to the transferase hexapeptide repeat family. LpxD subfamily. As to quaternary structure, homotrimer.

The enzyme catalyses a UDP-3-O-[(3R)-3-hydroxyacyl]-alpha-D-glucosamine + a (3R)-hydroxyacyl-[ACP] = a UDP-2-N,3-O-bis[(3R)-3-hydroxyacyl]-alpha-D-glucosamine + holo-[ACP] + H(+). The protein operates within bacterial outer membrane biogenesis; LPS lipid A biosynthesis. Catalyzes the N-acylation of UDP-3-O-acylglucosamine using 3-hydroxyacyl-ACP as the acyl donor. Is involved in the biosynthesis of lipid A, a phosphorylated glycolipid that anchors the lipopolysaccharide to the outer membrane of the cell. The chain is UDP-3-O-acylglucosamine N-acyltransferase from Leptothrix cholodnii (strain ATCC 51168 / LMG 8142 / SP-6) (Leptothrix discophora (strain SP-6)).